The chain runs to 156 residues: Ribosomally synthesized cyclic peptide victorin precursosr vicA1 (156 aa).

Positions 1-21 (MVRITALMSGSILLFALQALA) are cleaved as a signal peptide. 7 propeptides span residues 22–36 (MPVE…AEKR), 43–55 (KRGE…EEKR), 62–74 (KRGE…EEKR), 81–93 (KRGE…EEKR), 100–112 (KRGE…EEKR), 119–131 (KRGE…EEKR), and 138–150 (KRGE…EEKR).

In terms of processing, vicA1 is processed by several endopeptidases including kexin proteases as well as the cluster-specific peptidases vicP1 and vicP2 to produce 7 identical copies of the hexapeptide Gly-Leu-Lys-Leu-Ala-Phe, that are further modified to yield victorins. After being excised from the precursor peptide, the core peptides are cyclized and modified post-translationally by enzymes encoded within the gene cluster. The ustYa family protein vicYb is required for the formation of the macrocycle in victorin and the copper amine oxidases (CAOs) vicK1 and vicK2 are responsible for converting victorin to the active form by oxidizing the N-terminal glycyl residue in the peptides to glyoxylate. Relaxed substrate specificity of enzymes in the victorin biosynthetic pathway results in a metabolic grid that produces a set of analogs including victorinines B, C, E or HV-toxin M.

It functions in the pathway mycotoxin biosynthesis. Functionally, ribosomally synthesized cyclic peptide victorin precursor, part of the gene cluster that mediates the biosynthesis of the secondary metabolite victorin, the molecular basis for Victoria blight of oats. The vicA1 translated product contains a 7-fold repeated peptide embedding the hexapeptide Gly-Leu-Lys-Leu-Ala-Phe, that is converted into the cyclic victorin. This chain is Ribosomally synthesized cyclic peptide victorin precursosr vicA1, found in Bipolaris victoriae (strain FI3) (Victoria blight of oats agent).